We begin with the raw amino-acid sequence, 451 residues long: Deoxyguanosinetriphosphate triphosphohydrolase-like protein (451 aa).

Residues 61-274 (RLTHSLEVAQ…MELADDIAYG (214 aa)) enclose the HD domain.

This sequence belongs to the dGTPase family. Type 2 subfamily.

The sequence is that of Deoxyguanosinetriphosphate triphosphohydrolase-like protein from Actinobacillus succinogenes (strain ATCC 55618 / DSM 22257 / CCUG 43843 / 130Z).